Reading from the N-terminus, the 874-residue chain is Interleukin-12 receptor subunit beta-2 (874 aa).

Positions 1–23 (MAQTVRECSLALLFLFMWLLIKA) are cleaved as a signal peptide. Over 24–637 (NIDVCKLGTV…REFCPQGKAN (614 aa)) the chain is Extracellular. N-linked (GlcNAc...) asparagine glycosylation is found at N48, N101, N114, N142, N151, N169, N179, N224, N252, N279, N287, N323, N391, and N495. 5 consecutive Fibronectin type-III domains span residues 139–237 (PPQN…FLDI), 242–335 (PPWD…TPEE), 336–430 (EPVG…NIVD), 438–530 (APHQ…IRGD), and 536–635 (PVSG…PQGK). Positions 321 to 325 (WSNWS) match the WSXWS motif motif. Residues 638–658 (WKAFVISSICIAIITVGTFSI) traverse the membrane as a helical segment. Residues 659 to 874 (RYFRQKAFTL…GYDSLMSNEA (216 aa)) lie on the Cytoplasmic side of the membrane. Positions 677 to 685 (YSRTIPDPA) match the Box 1 motif motif. 3 positions are modified to phosphotyrosine: Y757, Y804, and Y811.

The protein belongs to the type I cytokine receptor family. Type 2 subfamily. Heterodimer/heterooligomer; disulfide-linked. The functional high affinity IL12 receptor is composed of I12RB1 and IL12RB2. Il12RB2 binds JAK2 (via its N-terminal) through a membrane-proximal region of the cytoplasmic domain. In terms of processing, on IL12 stimulation, phosphorylated on C-terminal tyrosine residues. Phosphorylation of any one of Tyr-757, Tyr-804 or Tyr-811 can activate STAT4, IFN-gamma production, and T-cell proliferation. Tyr-811 is the dominant site of cell proliferation. As to expression, expressed in developing T-helper (TH) cells.

The protein resides in the membrane. Functionally, receptor for interleukin-12. This subunit is the signaling component coupling to the JAK2/STAT4 pathway. Promotes the proliferation of T-cells as well as NK cells. Induces the promotion of T-cells towards the Th1 phenotype by strongly enhancing IFN-gamma production. Can also activate STAT3. This Mus musculus (Mouse) protein is Interleukin-12 receptor subunit beta-2 (Il12rb2).